Consider the following 237-residue polypeptide: DCN1-like protein 5 (237 aa).

S41 carries the post-translational modification Phosphoserine; by IKKA. In terms of domain architecture, DCUN1 spans 46–232 (FSRKKCLAWF…LLDEFVEWQK (187 aa)).

As to quaternary structure, part of a complex that contains DCUN1D5, CUL1 and RBX1; this interaction is bridged by CUL1. Interacts (via the DCUN1 domain) with the unneddylated cullins: interacts with CUL1, CUL2, CUL3, CUL4A, CUL4B and CUL5; these interactions promote the cullin neddylation and the identity of the cullin dictates the affinity of the interaction. Interacts (via DCUN1 domain) with UBE2M (N-terminally acetylated form) and probably with UBE2F (N-terminally acetylated form). May also interact with regulators or subunits of cullin-RING ligases such as RBX1, RNF7, ELOB and DDB1; these interactions are bridged by cullins. Interacts with CAND1; this interaction is bridged by cullins and strongly inhibits the neddylation of cullins. These CAND-cullin-DCNL complexes can only be neddylated in the presence of a substrate adapter. Post-translationally, phosphorylation at Ser-41 is independent of cullin's interaction. Phosphorylated in response to both TICAM1 and MYD88 dependent Toll-like receptor (TLR) pathway activation. Phosphorylated in response to IL1B stimulation. In terms of tissue distribution, highly expressed in testis. Lower levels of expression in skin, thymus, spleen, lymph nodes, lung, brain, heart, skeletal muscles, kidney, liver an ovary.

Its subcellular location is the nucleus. The protein localises to the cytoplasm. The protein resides in the cytoskeleton. It localises to the spindle. Functionally, contributes to the neddylation of all cullins by transferring NEDD8 from N-terminally acetylated NEDD8-conjugating E2s enzyme to different cullin C-terminal domain-RBX complexes which is necessary for the activation of cullin-RING E3 ubiquitin ligases (CRLs). May play a role in DNA damage response and may participate in cell proliferation and anchorage-independent cell growth. The sequence is that of DCN1-like protein 5 from Mus musculus (Mouse).